The primary structure comprises 207 residues: Large ribosomal subunit protein uL3c (207 aa).

The interval 128 to 148 (FTRGPMTHGSKNHRAPGSIGM) is disordered.

The protein belongs to the universal ribosomal protein uL3 family. In terms of assembly, part of the 50S ribosomal subunit.

The protein resides in the plastid. Its subcellular location is the chloroplast. One of the primary rRNA binding proteins, it binds directly near the 3'-end of the 23S rRNA, where it nucleates assembly of the 50S subunit. The polypeptide is Large ribosomal subunit protein uL3c (rpl3) (Trieres chinensis (Marine centric diatom)).